The primary structure comprises 41 residues: Large ribosomal subunit protein bL36B (41 aa).

It belongs to the bacterial ribosomal protein bL36 family.

The polypeptide is Large ribosomal subunit protein bL36B (Actinobacillus pleuropneumoniae serotype 5b (strain L20)).